The sequence spans 334 residues: Geranylgeranyl pyrophosphate synthase ltmG (334 aa).

Residues Lys53, Arg56, and His85 each coordinate isopentenyl diphosphate. Mg(2+) is bound by residues Asp92 and Asp96. Arg101 provides a ligand contact to dimethylallyl diphosphate. Arg102 is a binding site for isopentenyl diphosphate. Dimethylallyl diphosphate contacts are provided by Lys179, Thr180, and Gln213. Asp216 provides a ligand contact to Mg(2+). Residues Asn220, Lys230, and Lys240 each coordinate dimethylallyl diphosphate.

This sequence belongs to the FPP/GGPP synthase family. Requires Mg(2+) as cofactor.

It carries out the reaction isopentenyl diphosphate + dimethylallyl diphosphate = (2E)-geranyl diphosphate + diphosphate. It catalyses the reaction isopentenyl diphosphate + (2E)-geranyl diphosphate = (2E,6E)-farnesyl diphosphate + diphosphate. The catalysed reaction is isopentenyl diphosphate + (2E,6E)-farnesyl diphosphate = (2E,6E,10E)-geranylgeranyl diphosphate + diphosphate. Its pathway is secondary metabolite biosynthesis. Geranylgeranyl pyrophosphate synthase; part of the gene cluster that mediates the biosynthesis of lolitrems, indole-diterpene mycotoxins that are potent tremorgens in mammals, and are synthesized by clavicipitaceous fungal endophytes in association with their grass hosts. The geranylgeranyl diphosphate (GGPP) synthase ltmG is proposed to catalyze the first step in lolitrem biosynthesis. LtmG catalyzes a series of iterative condensations of isopentenyl diphosphate (IPP) with dimethylallyl diphosphate (DMAPP), geranyl diphosphate (GPP), and farnesyl diphosphate (FPP), to form GGPP. GGPP then condenses with indole-3-glycerol phosphate to form 3-geranylgeranylindole, an acyclic intermediate, to be incorporated into paxilline. Either ltmG or ltmC could be responsible for this step, as both are putative prenyl transferases. The FAD-dependent monooxygenase ltmM then catalyzes the epoxidation of the two terminal alkenes of the geranylgeranyl moiety, which is subsequently cyclized by ltmB, to paspaline. The cytochrome P450 monooxygenases ltmQ and ltmP can sequentially oxidize paspaline to terpendole E and terpendole F. Alternatively, ltmP converts paspaline to an intermediate which is oxidized by ltmQ to terpendole F. LtmF, ltmK, ltmE and ltmJ appear to be unique to the epichloe endophytes. The prenyltransferase ltmF is involved in the 27-hydroxyl-O-prenylation. The cytochrome P450 monooxygenase ltmK is required for the oxidative acetal ring formation. The multi-functional prenyltransferase ltmE is required for C20- and C21-prenylations of the indole ring of paspalanes and acts together with the cytochrome P450 monooxygenase ltmJ to yield lolitremanes by multiple oxidations and ring closures. The stereoisomer pairs of lolitriol and lolitrem N or lolitrem B and lolitrem F may be attributed to variations in the way in which ring closure can occur under the action of ltmJ. While the major product of this pathway is lolitrem B, the prenyl transferases and cytochrome P450 monooxygenases identified in this pathway have a remarkable versatility in their regio- and stereo-specificities to generate a diverse range of metabolites that are products of a metabolic grid rather than a linear pathway. The protein is Geranylgeranyl pyrophosphate synthase ltmG of Epichloe festucae (strain Fl1).